The primary structure comprises 468 residues: UDP-N-acetylmuramate--L-alanine ligase (468 aa).

Residue 118-124 coordinates ATP; the sequence is GTHGKTT.

This sequence belongs to the MurCDEF family.

It localises to the cytoplasm. It carries out the reaction UDP-N-acetyl-alpha-D-muramate + L-alanine + ATP = UDP-N-acetyl-alpha-D-muramoyl-L-alanine + ADP + phosphate + H(+). Its pathway is cell wall biogenesis; peptidoglycan biosynthesis. Cell wall formation. This Roseobacter denitrificans (strain ATCC 33942 / OCh 114) (Erythrobacter sp. (strain OCh 114)) protein is UDP-N-acetylmuramate--L-alanine ligase.